The following is a 284-amino-acid chain: Bifunctional protein FolD 2 (284 aa).

NADP(+)-binding positions include Gly166–Ser168 and Ile232.

Belongs to the tetrahydrofolate dehydrogenase/cyclohydrolase family. As to quaternary structure, homodimer.

It catalyses the reaction (6R)-5,10-methylene-5,6,7,8-tetrahydrofolate + NADP(+) = (6R)-5,10-methenyltetrahydrofolate + NADPH. The catalysed reaction is (6R)-5,10-methenyltetrahydrofolate + H2O = (6R)-10-formyltetrahydrofolate + H(+). It functions in the pathway one-carbon metabolism; tetrahydrofolate interconversion. Functionally, catalyzes the oxidation of 5,10-methylenetetrahydrofolate to 5,10-methenyltetrahydrofolate and then the hydrolysis of 5,10-methenyltetrahydrofolate to 10-formyltetrahydrofolate. The chain is Bifunctional protein FolD 2 from Pseudomonas putida (strain ATCC 47054 / DSM 6125 / CFBP 8728 / NCIMB 11950 / KT2440).